A 126-amino-acid polypeptide reads, in one-letter code: UPF0102 protein TP_0913 (126 aa).

It belongs to the UPF0102 family.

In Treponema pallidum (strain Nichols), this protein is UPF0102 protein TP_0913.